A 488-amino-acid polypeptide reads, in one-letter code: Glutamyl-tRNA(Gln) amidotransferase subunit A (488 aa).

Catalysis depends on charge relay system residues Lys77 and Ser152. Residue Ser176 is the Acyl-ester intermediate of the active site.

It belongs to the amidase family. GatA subfamily. In terms of assembly, heterotrimer of A, B and C subunits.

It catalyses the reaction L-glutamyl-tRNA(Gln) + L-glutamine + ATP + H2O = L-glutaminyl-tRNA(Gln) + L-glutamate + ADP + phosphate + H(+). Allows the formation of correctly charged Gln-tRNA(Gln) through the transamidation of misacylated Glu-tRNA(Gln) in organisms which lack glutaminyl-tRNA synthetase. The reaction takes place in the presence of glutamine and ATP through an activated gamma-phospho-Glu-tRNA(Gln). This chain is Glutamyl-tRNA(Gln) amidotransferase subunit A, found in Streptococcus pneumoniae (strain Hungary19A-6).